The sequence spans 180 residues: Sec-independent protein translocase protein TatB (180 aa).

Residues 1–21 traverse the membrane as a helical segment; sequence MFDIGWSELLVIGVVALIAIG. Residues 77–180 form a disordered region; the sequence is TRGDLMTRLT…DQTARGAKAS (104 aa). Over residues 105 to 129 the composition is skewed to low complexity; sequence ADKPSVSSDAASASGSAAPEAGAAE.

The protein belongs to the TatB family. As to quaternary structure, the Tat system comprises two distinct complexes: a TatABC complex, containing multiple copies of TatA, TatB and TatC subunits, and a separate TatA complex, containing only TatA subunits. Substrates initially bind to the TatABC complex, which probably triggers association of the separate TatA complex to form the active translocon.

The protein resides in the cell inner membrane. Part of the twin-arginine translocation (Tat) system that transports large folded proteins containing a characteristic twin-arginine motif in their signal peptide across membranes. Together with TatC, TatB is part of a receptor directly interacting with Tat signal peptides. TatB may form an oligomeric binding site that transiently accommodates folded Tat precursor proteins before their translocation. The polypeptide is Sec-independent protein translocase protein TatB (Nitrobacter winogradskyi (strain ATCC 25391 / DSM 10237 / CIP 104748 / NCIMB 11846 / Nb-255)).